The primary structure comprises 179 residues: Large ribosomal subunit protein uL6c (179 aa).

The protein belongs to the universal ribosomal protein uL6 family. As to quaternary structure, part of the 50S ribosomal subunit.

It is found in the plastid. The protein localises to the cyanelle. Binds 23S rRNA. This chain is Large ribosomal subunit protein uL6c (rpl6), found in Cyanophora paradoxa.